The primary structure comprises 189 residues: Elongation factor P (189 aa).

The protein belongs to the elongation factor P family.

Its subcellular location is the cytoplasm. It participates in protein biosynthesis; polypeptide chain elongation. Functionally, involved in peptide bond synthesis. Stimulates efficient translation and peptide-bond synthesis on native or reconstituted 70S ribosomes in vitro. Probably functions indirectly by altering the affinity of the ribosome for aminoacyl-tRNA, thus increasing their reactivity as acceptors for peptidyl transferase. The protein is Elongation factor P of Ehrlichia ruminantium (strain Gardel).